Here is a 613-residue protein sequence, read N- to C-terminus: Thioredoxin reductase 1, cytoplasmic (613 aa).

Residues 58 to 121 (AVLPASRPSK…LPTMNGSKDP (64 aa)) form a disordered region. The segment covering 65–74 (PSKTLPSSSQ) has biased composition (polar residues). Residues 136–137 (SG), 156–157 (DF), 172–173 (TC), and 177–181 (GCIPK) contribute to the FAD site. A disulfide bridge connects residues Cys173 and Cys178. Lys182 is subject to N6-succinyllysine. Tyr245 carries the phosphotyrosine modification. Residues 245–246 (YG) and Thr275 contribute to the FAD site. NADP(+) is bound by residues Arg280, 312-318 (ASYVALE), 335-336 (RS), Arg340, 340-342 (RGF), 406-407 (GR), and Lys429. FAD is bound at residue Tyr314. Residues Asp448, 455–457 (ELT), and His586 each bind FAD. Position 455 (Glu455) interacts with NADP(+). His586 serves as the catalytic Proton acceptor. Positions 611-612 (CU) form a cross-link, cysteinyl-selenocysteine (Cys-Sec). Residue Sec612 is a non-standard amino acid, selenocysteine.

Belongs to the class-I pyridine nucleotide-disulfide oxidoreductase family. Homodimer. FAD serves as cofactor. Post-translationally, ISGylated.

Its subcellular location is the cytoplasm. It catalyses the reaction [thioredoxin]-dithiol + NADP(+) = [thioredoxin]-disulfide + NADPH + H(+). The enzyme catalyses H2O2 + NADPH + H(+) = NADP(+) + 2 H2O. In terms of biological role, reduces disulfideprotein thioredoxin (Trx) to its dithiol-containing form. Homodimeric flavoprotein involved in the regulation of cellular redox reactions, growth and differentiation. Contains a selenocysteine residue at the C-terminal active site that is essential for catalysis. Also has reductase activity on hydrogen peroxide (H2O2). This is Thioredoxin reductase 1, cytoplasmic from Mus musculus (Mouse).